A 528-amino-acid polypeptide reads, in one-letter code: Na(+)/H(+) antiporter NhaB (528 aa).

The next 11 helical transmembrane spans lie at 23–45 (FAIL…IAGW), 66–86 (PGGL…TQVL), 95–115 (VLLL…LLLY), 130–164 (VSML…FYSI), 203–223 (LLMH…VGEP), 241–261 (IRMS…CFIV), 310–330 (LIVG…SVII), 349–369 (EEAL…GVII), 390–410 (LVIF…VFVG), 448–468 (ATPN…APLI), and 475–495 (MVMM…LAIE).

Belongs to the NhaB Na(+)/H(+) (TC 2.A.34) antiporter family.

It is found in the cell inner membrane. It catalyses the reaction 2 Na(+)(in) + 3 H(+)(out) = 2 Na(+)(out) + 3 H(+)(in). In terms of biological role, na(+)/H(+) antiporter that extrudes sodium in exchange for external protons. This Shewanella amazonensis (strain ATCC BAA-1098 / SB2B) protein is Na(+)/H(+) antiporter NhaB.